The primary structure comprises 206 residues: uncharacterized protein (206 aa).

The N-terminal stretch at 1–18 (MKTYSLLLGLFISFGVLA) is a signal peptide.

This is an uncharacterized protein from Haemophilus influenzae (strain ATCC 51907 / DSM 11121 / KW20 / Rd).